We begin with the raw amino-acid sequence, 615 residues long: Elongation factor 4 (615 aa).

In terms of domain architecture, tr-type G spans 14-200; the sequence is SRIRNFCIIA…KVVELIPAPS (187 aa). GTP-binding positions include 26 to 31 and 147 to 150; these read DHGKST and NKID.

It belongs to the TRAFAC class translation factor GTPase superfamily. Classic translation factor GTPase family. LepA subfamily.

It localises to the cell membrane. The enzyme catalyses GTP + H2O = GDP + phosphate + H(+). Functionally, required for accurate and efficient protein synthesis under certain stress conditions. May act as a fidelity factor of the translation reaction, by catalyzing a one-codon backward translocation of tRNAs on improperly translocated ribosomes. Back-translocation proceeds from a post-translocation (POST) complex to a pre-translocation (PRE) complex, thus giving elongation factor G a second chance to translocate the tRNAs correctly. Binds to ribosomes in a GTP-dependent manner. This chain is Elongation factor 4, found in Corynebacterium efficiens (strain DSM 44549 / YS-314 / AJ 12310 / JCM 11189 / NBRC 100395).